The sequence spans 208 residues: Outer-membrane lipoprotein carrier protein (208 aa).

Residues 1–22 form the signal peptide; sequence MKNLLCAVMLTSPLLYSTAVFA.

Belongs to the LolA family. Monomer.

The protein localises to the periplasm. Functionally, participates in the translocation of lipoproteins from the inner membrane to the outer membrane. Only forms a complex with a lipoprotein if the residue after the N-terminal Cys is not an aspartate (The Asp acts as a targeting signal to indicate that the lipoprotein should stay in the inner membrane). The sequence is that of Outer-membrane lipoprotein carrier protein from Shewanella sp. (strain W3-18-1).